Here is a 550-residue protein sequence, read N- to C-terminus: Chaperonin GroEL (550 aa).

ATP contacts are provided by residues 29-32, Lys-50, 86-90, Gly-414, and Asp-495; these read TLGP and DGTTT.

The protein belongs to the chaperonin (HSP60) family. As to quaternary structure, forms a cylinder of 14 subunits composed of two heptameric rings stacked back-to-back. Interacts with the co-chaperonin GroES.

It is found in the cytoplasm. The catalysed reaction is ATP + H2O + a folded polypeptide = ADP + phosphate + an unfolded polypeptide.. Its function is as follows. Together with its co-chaperonin GroES, plays an essential role in assisting protein folding. The GroEL-GroES system forms a nano-cage that allows encapsulation of the non-native substrate proteins and provides a physical environment optimized to promote and accelerate protein folding. This Parvibaculum lavamentivorans (strain DS-1 / DSM 13023 / NCIMB 13966) protein is Chaperonin GroEL.